A 312-amino-acid chain; its full sequence is Methionyl-tRNA formyltransferase (312 aa).

A (6S)-5,6,7,8-tetrahydrofolate-binding site is contributed by 117 to 120 (SLLP).

Belongs to the Fmt family.

The catalysed reaction is L-methionyl-tRNA(fMet) + (6R)-10-formyltetrahydrofolate = N-formyl-L-methionyl-tRNA(fMet) + (6S)-5,6,7,8-tetrahydrofolate + H(+). Its function is as follows. Attaches a formyl group to the free amino group of methionyl-tRNA(fMet). The formyl group appears to play a dual role in the initiator identity of N-formylmethionyl-tRNA by promoting its recognition by IF2 and preventing the misappropriation of this tRNA by the elongation apparatus. This chain is Methionyl-tRNA formyltransferase, found in Bordetella bronchiseptica (strain ATCC BAA-588 / NCTC 13252 / RB50) (Alcaligenes bronchisepticus).